The following is a 227-amino-acid chain: Cytidylate kinase (227 aa).

An ATP-binding site is contributed by 12-20 (GPSGAGKGT).

The protein belongs to the cytidylate kinase family. Type 1 subfamily.

It is found in the cytoplasm. It carries out the reaction CMP + ATP = CDP + ADP. The catalysed reaction is dCMP + ATP = dCDP + ADP. In Shigella boydii serotype 4 (strain Sb227), this protein is Cytidylate kinase.